A 213-amino-acid chain; its full sequence is Protein arginine N-methyltransferase SFM1 (213 aa).

Serine 204 and serine 207 each carry phosphoserine.

This sequence belongs to the class IV-like SAM-binding methyltransferase superfamily. Protein arginine N-methyltransferase SFM1 family.

The protein localises to the cytoplasm. Its function is as follows. S-adenosyl-L-methionine-dependent protein-arginine N-methyltransferase that monomethylates ribosomal protein S3 (RPS3) at 'Arg-146'. This Saccharomyces cerevisiae (strain ATCC 204508 / S288c) (Baker's yeast) protein is Protein arginine N-methyltransferase SFM1.